The primary structure comprises 435 residues: Adenylosuccinate synthetase (435 aa).

Residues 17-23 and 45-47 each bind GTP; these read GDEGKGK and GHT. The Proton acceptor role is filled by Asp18. Mg(2+)-binding residues include Asp18 and Gly45. IMP contacts are provided by residues 18 to 21, 43 to 46, Thr135, Arg149, Gln230, Thr245, and Arg309; these read DEGK and NAGH. His46 serves as the catalytic Proton donor. 305 to 311 lines the substrate pocket; the sequence is TVSGRAR. Residues Arg311, 337-339, and 419-421 each bind GTP; these read LLD and SVG.

Belongs to the adenylosuccinate synthetase family. As to quaternary structure, homodimer. It depends on Mg(2+) as a cofactor.

The protein resides in the cytoplasm. The catalysed reaction is IMP + L-aspartate + GTP = N(6)-(1,2-dicarboxyethyl)-AMP + GDP + phosphate + 2 H(+). It participates in purine metabolism; AMP biosynthesis via de novo pathway; AMP from IMP: step 1/2. Its function is as follows. Plays an important role in the de novo pathway of purine nucleotide biosynthesis. Catalyzes the first committed step in the biosynthesis of AMP from IMP. The protein is Adenylosuccinate synthetase of Spiroplasma citri.